Here is a 617-residue protein sequence, read N- to C-terminus: ATP-dependent RNA helicase DBP1 (617 aa).

A disordered region spans residues 1–90 (MADLPQKVSN…TSANYNRGGS (90 aa)). Over residues 7–17 (KVSNLSINNKE) the composition is skewed to polar residues. Residues 38 to 58 (PSFERSTPKQEDKVTGGDFFR) show a composition bias toward basic and acidic residues. The span at 79-90 (GGTSANYNRGGS) shows a compositional bias: polar residues. The short motif at 154–182 (LDFSSPPLDELLMENIKLASFTKPTPVQK) is the Q motif element. A Helicase ATP-binding domain is found at 185–374 (IPIVTKGRDL…RDFLDNYIFL (190 aa)). 198 to 205 (AQTGSGKT) serves as a coordination point for ATP. Residues 318–321 (DEAD) carry the DEAD box motif. In terms of domain architecture, Helicase C-terminal spans 385 to 545 (NITQRILYVD…EVPTFLSDLS (161 aa)). The interval 542-617 (SDLSRQNSRG…GYGNSNASWW (76 aa)) is disordered. Residues 580-594 (FGSTRPRNTGTSNWG) show a composition bias toward polar residues.

Belongs to the DEAD box helicase family. DDX3/DED1 subfamily.

The protein resides in the cytoplasm. The enzyme catalyses ATP + H2O = ADP + phosphate + H(+). Its function is as follows. ATP-binding RNA helicase involved in translation initiation. Remodels RNA in response to ADP and ATP concentrations by facilitating disruption, but also formation of RNA duplexes. Redundant to DED1, may be required in conditions in which DED1 expression is decreased. This is ATP-dependent RNA helicase DBP1 (DBP1) from Saccharomyces cerevisiae (strain YJM789) (Baker's yeast).